The following is a 552-amino-acid chain: Esterase E4 (552 aa).

The N-terminal stretch at 1 to 23 (MKNTCGILLNLFLFIGCFLTCSA) is a signal peptide. Asparagine 81 carries N-linked (GlcNAc...) asparagine glycosylation. The cysteines at positions 89 and 106 are disulfide-linked. Serine 214 functions as the Acyl-ester intermediate in the catalytic mechanism. Residues cysteine 266 and cysteine 277 are joined by a disulfide bond. N-linked (GlcNAc...) asparagine glycosylation is present at asparagine 269. The active-site Charge relay system is the glutamate 339. 3 N-linked (GlcNAc...) asparagine glycosylation sites follow: asparagine 371, asparagine 404, and asparagine 443. The active-site Charge relay system is the histidine 463.

It belongs to the type-B carboxylesterase/lipase family.

It carries out the reaction a carboxylic ester + H2O = an alcohol + a carboxylate + H(+). Its function is as follows. Overproduction of nonspecific esterases is a common mechanism of resistance to organophosphate insecticides. The polypeptide is Esterase E4 (Myzus persicae (Green peach aphid)).